The following is a 407-amino-acid chain: Na(+)-translocating NADH-quinone reductase subunit F (407 aa).

Residues 3–23 traverse the membrane as a helical segment; it reads ITLGIAMFTVIVLALAVLILF. The 2Fe-2S ferredoxin-type domain occupies 32 to 126; the sequence is GDITIEINDD…SMKIELPEEV (95 aa). [2Fe-2S] cluster-binding residues include Cys69, Cys75, Cys78, and Cys110. Residues 129–269 enclose the FAD-binding FR-type domain; sequence VKKWECTVIS…SGPFGEFFAK (141 aa).

The protein belongs to the NqrF family. Composed of six subunits; NqrA, NqrB, NqrC, NqrD, NqrE and NqrF. [2Fe-2S] cluster is required as a cofactor. It depends on FAD as a cofactor.

It is found in the cell inner membrane. The catalysed reaction is a ubiquinone + n Na(+)(in) + NADH + H(+) = a ubiquinol + n Na(+)(out) + NAD(+). NQR complex catalyzes the reduction of ubiquinone-1 to ubiquinol by two successive reactions, coupled with the transport of Na(+) ions from the cytoplasm to the periplasm. The first step is catalyzed by NqrF, which accepts electrons from NADH and reduces ubiquinone-1 to ubisemiquinone by a one-electron transfer pathway. This Histophilus somni (strain 129Pt) (Haemophilus somnus) protein is Na(+)-translocating NADH-quinone reductase subunit F.